We begin with the raw amino-acid sequence, 264 residues long: MLLGLGIVVLIYSLIALSVSLTTPNGAFSGLGDWLKHKKLGWFFGVLNLLIALGVAGIINGFVMWTGKLTQSLIKSGELWVPDKCKLCLNKPKPVVGLIHAGILMVLTTVALSSLGGLLYLPKVNASYDGKGFKSMGCLLEFADLIATWTSVGIFWFLGLVLLGGLLQIKKPKRWYFRTTGWLAVVVIGLTTLVVMVQPFVDLGIAVFNRSYERIVANTILIAILVIIVLVMFFPTEPIKLRLWRKRIQAMEACGEDCDACVEY.

The next 6 membrane-spanning stretches (helical) occupy residues 1 to 21 (MLLG…SVSL), 43 to 63 (FFGV…NGFV), 95 to 115 (VVGL…LSSL), 146 to 166 (IATW…LGGL), 181 to 201 (GWLA…QPFV), and 215 to 235 (IVAN…MFFP).

To M.pneumoniae MPN_308 C-terminal region.

Its subcellular location is the cell membrane. This is an uncharacterized protein from Mycoplasma pneumoniae (strain ATCC 29342 / M129 / Subtype 1) (Mycoplasmoides pneumoniae).